Here is a 202-residue protein sequence, read N- to C-terminus: 3-isopropylmalate dehydratase small subunit 1 (202 aa).

The protein belongs to the LeuD family. LeuD type 1 subfamily. Heterodimer of LeuC and LeuD.

The enzyme catalyses (2R,3S)-3-isopropylmalate = (2S)-2-isopropylmalate. It functions in the pathway amino-acid biosynthesis; L-leucine biosynthesis; L-leucine from 3-methyl-2-oxobutanoate: step 2/4. Catalyzes the isomerization between 2-isopropylmalate and 3-isopropylmalate, via the formation of 2-isopropylmaleate. The protein is 3-isopropylmalate dehydratase small subunit 1 of Bordetella pertussis (strain Tohama I / ATCC BAA-589 / NCTC 13251).